The sequence spans 498 residues: NADH-quinone oxidoreductase subunit N (498 aa).

14 consecutive transmembrane segments (helical) span residues 10 to 30, 44 to 64, 68 to 88, 109 to 129, 130 to 150, 164 to 184, 207 to 227, 239 to 259, 273 to 293, 301 to 321, 328 to 348, 377 to 397, 412 to 434, and 458 to 478; these read LMPL…MLLI, VVGL…GKFV, VMGM…ILVA, ELYL…ASSH, YASF…LLAY, YLVL…YIYA, VLLG…LAPF, PAPM…GLFV, LVTV…LLAV, ILGY…ISMT, VTVY…AVAL, ATLT…GFIG, FLAA…VMVV, and LMVL…DPMI.

It belongs to the complex I subunit 2 family. In terms of assembly, NDH-1 is composed of 14 different subunits. Subunits NuoA, H, J, K, L, M, N constitute the membrane sector of the complex.

It is found in the cell inner membrane. The enzyme catalyses a quinone + NADH + 5 H(+)(in) = a quinol + NAD(+) + 4 H(+)(out). In terms of biological role, NDH-1 shuttles electrons from NADH, via FMN and iron-sulfur (Fe-S) centers, to quinones in the respiratory chain. The immediate electron acceptor for the enzyme in this species is believed to be ubiquinone. Couples the redox reaction to proton translocation (for every two electrons transferred, four hydrogen ions are translocated across the cytoplasmic membrane), and thus conserves the redox energy in a proton gradient. This Acinetobacter baumannii (strain AB0057) protein is NADH-quinone oxidoreductase subunit N.